Consider the following 207-residue polypeptide: Small ribosomal subunit protein uS3c (207 aa).

One can recognise a KH type-2 domain in the interval 39–109; sequence IRDYIFTNLL…QLKINIIDVT (71 aa).

This sequence belongs to the universal ribosomal protein uS3 family. In terms of assembly, part of the 30S ribosomal subunit.

It is found in the plastid. The protein localises to the chloroplast. This Cyanidium caldarium (Red alga) protein is Small ribosomal subunit protein uS3c (rps3).